The sequence spans 384 residues: Acetylgalactosaminyl-O-glycosyl-glycoprotein beta-1,3-N-acetylglucosaminyltransferase (384 aa).

Topologically, residues 1–12 are cytoplasmic; sequence MAFPCRRSLTAK. A helical; Signal-anchor for type II membrane protein membrane pass occupies residues 13–31; the sequence is TLACLLVGVSFLALQQWFL. The Lumenal portion of the chain corresponds to 32-384; the sequence is QAPRSPREER…LSCDRGHRVS (353 aa). The interval 34–68 is disordered; it reads PRSPREERSPQEETPEGPTDAPAADEPPSELVPGP. 3 N-linked (GlcNAc...) asparagine glycosylation sites follow: Asn-73, Asn-77, and Asn-196.

Belongs to the glycosyltransferase 31 family. In terms of tissue distribution, present in stomach and colon (at protein level). Restricted in the stomach, colon and small intestine, where core 3 structure is present.

It is found in the golgi apparatus membrane. It carries out the reaction a 3-O-[N-acetyl-alpha-D-galactosaminyl]-L-threonyl-[protein] + UDP-N-acetyl-alpha-D-glucosamine = a 3-O-[N-acetyl-beta-D-glucosaminyl-(1-&gt;3)-N-acetyl-alpha-D-galactosaminyl]-L-threonyl-[protein] + UDP + H(+). The catalysed reaction is a 3-O-[N-acetyl-alpha-D-galactosaminyl]-L-seryl-[protein] + UDP-N-acetyl-alpha-D-glucosamine = 3-O-[N-acetyl-beta-D-glucosaminyl-(1-&gt;3)-N-acetyl-alpha-D-galactosaminyl]-L-seryl-[protein] + UDP + H(+). It participates in protein modification; protein glycosylation. In terms of biological role, beta-1,3-N-acetylglucosaminyltransferase that synthesizes the core 3 structure of the O-glycan, an important precursor in the biosynthesis of mucin-type glycoproteins. Plays an important role in the synthesis of mucin-type O-glycans in digestive organs. The sequence is that of Acetylgalactosaminyl-O-glycosyl-glycoprotein beta-1,3-N-acetylglucosaminyltransferase (B3GNT6) from Homo sapiens (Human).